An 84-amino-acid polypeptide reads, in one-letter code: RNA-binding protein Hfq (84 aa).

Residues 9-68 enclose the Sm domain; that stretch reads DPYLNTLRKERVPVSIYLVNGIKLQGQIESFDQFVILLKNTVSQMVYKHAISTVVPGRPV.

It belongs to the Hfq family. Homohexamer.

In terms of biological role, RNA chaperone that binds small regulatory RNA (sRNAs) and mRNAs to facilitate mRNA translational regulation in response to envelope stress, environmental stress and changes in metabolite concentrations. Also binds with high specificity to tRNAs. This chain is RNA-binding protein Hfq, found in Stutzerimonas stutzeri (strain A1501) (Pseudomonas stutzeri).